A 240-amino-acid polypeptide reads, in one-letter code: ATP synthase subunit a (240 aa).

Transmembrane regions (helical) follow at residues 21–41, 78–98, 116–136, 183–203, and 212–232; these read LSNLMMTFIVCLIVFVFCVWG, IFLPLGLTLIFYILVSNLIGV, DAVMTLTLSTMIIALTHYYGI, ILLSLLVGLATTSIFGFFGAA, and FSVFIGAIQSYVFVMLTMVYM.

This sequence belongs to the ATPase A chain family. As to quaternary structure, F-type ATPases have 2 components, CF(1) - the catalytic core - and CF(0) - the membrane proton channel. CF(1) has five subunits: alpha(3), beta(3), gamma(1), delta(1), epsilon(1). CF(0) has three main subunits: a(1), b(2) and c(9-12). The alpha and beta chains form an alternating ring which encloses part of the gamma chain. CF(1) is attached to CF(0) by a central stalk formed by the gamma and epsilon chains, while a peripheral stalk is formed by the delta and b chains.

The protein resides in the cell membrane. Its function is as follows. Key component of the proton channel; it plays a direct role in the translocation of protons across the membrane. The sequence is that of ATP synthase subunit a from Oceanobacillus iheyensis (strain DSM 14371 / CIP 107618 / JCM 11309 / KCTC 3954 / HTE831).